Consider the following 972-residue polypeptide: Macrophage colony-stimulating factor 1 receptor (972 aa).

Positions 1-19 (MGPGVLLLLLVATAWHGQG) are cleaved as a signal peptide. Over 20–517 (IPVIEPSVPE…HPPDEFLFTP (498 aa)) the chain is Extracellular. Ig-like C2-type domains are found at residues 21–104 (PVIE…VKDP), 107–197 (PWNV…KVQK), 203–290 (PALT…HSTS), 299–399 (AYLN…LTLR), and 402–502 (PEVS…IPIS). Intrachain disulfides connect Cys42–Cys84, Cys127–Cys177, and Cys224–Cys278. N-linked (GlcNAc...) asparagine glycosylation is found at Asn45, Asn73, Asn153, Asn240, Asn275, Asn302, Asn335, Asn353, Asn412, Asn428, and Asn480. Cys419 and Cys485 are joined by a disulfide. A helical transmembrane segment spans residues 518–538 (VVVACMSIMALLLLLLLLLLY). Topologically, residues 539–972 (KYKQKPKYQV…LLQPNNYQFC (434 aa)) are cytoplasmic. Residues 542–574 (QKPKYQVRWKIIESYEGNSYTFIDPTQLPYNEK) are regulatory juxtamembrane domain. A phosphotyrosine; by autocatalysis mark is found at Tyr546 and Tyr561. Residues 582–910 (LQFGKTLGAG…PTFQQICSFL (329 aa)) enclose the Protein kinase domain. ATP-binding positions include 588–596 (LGAGAFGKV) and Lys616. Phosphotyrosine; by autocatalysis occurs at positions 699 and 708. Phosphoserine is present on Ser713. Residue Tyr723 is modified to Phosphotyrosine; by autocatalysis. Asp778 functions as the Proton acceptor in the catalytic mechanism. An activation loop region spans residues 796–818 (DFGLARDIMNDSNYIVKGNARLP). Phosphotyrosine; by autocatalysis occurs at positions 809 and 923. The segment at 918-950 (RRERDYTNLPSSSRSGGSGSSSSELEEESSSEH) is disordered. Over residues 928 to 940 (SSSRSGGSGSSSS) the composition is skewed to low complexity. At Tyr969 the chain carries Phosphotyrosine; by autocatalysis.

The protein belongs to the protein kinase superfamily. Tyr protein kinase family. CSF-1/PDGF receptor subfamily. In terms of assembly, interacts with INPPL1/SHIP2 and THOC5. Monomer. Homodimer. Interacts with CSF1 and IL34. Interaction with dimeric CSF1 or IL34 leads to receptor homodimerization. Interacts (tyrosine phosphorylated) with PLCG2 (via SH2 domain). Interacts (tyrosine phosphorylated) with PIK3R1 (via SH2 domain). Interacts (tyrosine phosphorylated) with FYN, YES1 and SRC (via SH2 domain). Interacts (tyrosine phosphorylated) with CBL, GRB2 and SLA2. Autophosphorylated in response to CSF1 or IL34 binding. Phosphorylation at Tyr-561 is important for normal down-regulation of signaling by ubiquitination, internalization and degradation. Phosphorylation at Tyr-561 and Tyr-809 is important for interaction with SRC family members, including FYN, YES1 and SRC, and for subsequent activation of these protein kinases. Phosphorylation at Tyr-699 and Tyr-923 is important for interaction with GRB2. Phosphorylation at Tyr-723 is important for interaction with PIK3R1. Phosphorylation at Tyr-708 is important for normal receptor degradation. Phosphorylation at Tyr-723 and Tyr-809 is important for interaction with PLCG2. Phosphorylation at Tyr-969 is important for interaction with CBL. Dephosphorylation by PTPN2 negatively regulates downstream signaling and macrophage differentiation. Post-translationally, ubiquitinated. Becomes rapidly polyubiquitinated after autophosphorylation, leading to its degradation. Expressed in bone marrow and in differentiated blood mononuclear cells.

The protein resides in the cell membrane. It carries out the reaction L-tyrosyl-[protein] + ATP = O-phospho-L-tyrosyl-[protein] + ADP + H(+). Present in an inactive conformation in the absence of bound ligand. CSF1 or IL34 binding leads to dimerization and activation by autophosphorylation on tyrosine residues. Inhibited by imatinib/STI-571 (Gleevec), dasatinib, sunitinib/SU11248, lestaurtinib/CEP-701, midostaurin/PKC-412, Ki20227, linifanib/ABT-869, Axitinib/AG013736, sorafenib/BAY 43-9006 and GW2580. In terms of biological role, tyrosine-protein kinase that acts as a cell-surface receptor for CSF1 and IL34 and plays an essential role in the regulation of survival, proliferation and differentiation of hematopoietic precursor cells, especially mononuclear phagocytes, such as macrophages and monocytes. Promotes the release of pro-inflammatory chemokines in response to IL34 and CSF1, and thereby plays an important role in innate immunity and in inflammatory processes. Plays an important role in the regulation of osteoclast proliferation and differentiation, the regulation of bone resorption, and is required for normal bone and tooth development. Required for normal male and female fertility, and for normal development of milk ducts and acinar structures in the mammary gland during pregnancy. Promotes reorganization of the actin cytoskeleton, regulates formation of membrane ruffles, cell adhesion and cell migration, and promotes cancer cell invasion. Activates several signaling pathways in response to ligand binding, including the ERK1/2 and the JNK pathway. Phosphorylates PIK3R1, PLCG2, GRB2, SLA2 and CBL. Activation of PLCG2 leads to the production of the cellular signaling molecules diacylglycerol and inositol 1,4,5-trisphosphate, that then lead to the activation of protein kinase C family members, especially PRKCD. Phosphorylation of PIK3R1, the regulatory subunit of phosphatidylinositol 3-kinase, leads to activation of the AKT1 signaling pathway. Activated CSF1R also mediates activation of the MAP kinases MAPK1/ERK2 and/or MAPK3/ERK1, and of the SRC family kinases SRC, FYN and YES1. Activated CSF1R transmits signals both via proteins that directly interact with phosphorylated tyrosine residues in its intracellular domain, or via adapter proteins, such as GRB2. Promotes activation of STAT family members STAT3, STAT5A and/or STAT5B. Promotes tyrosine phosphorylation of SHC1 and INPP5D/SHIP-1. Receptor signaling is down-regulated by protein phosphatases, such as INPP5D/SHIP-1, that dephosphorylate the receptor and its downstream effectors, and by rapid internalization of the activated receptor. In the central nervous system, may play a role in the development of microglia macrophages. This is Macrophage colony-stimulating factor 1 receptor (CSF1R) from Homo sapiens (Human).